We begin with the raw amino-acid sequence, 527 residues long: Probable feruloyl esterase B (527 aa).

An N-terminal signal peptide occupies residues 1-19 (MALLRHLLPVLTVGSAVQS). 2 disulfides stabilise this stretch: cysteine 31–cysteine 76 and cysteine 65–cysteine 115. N-linked (GlcNAc...) asparagine glycans are attached at residues asparagine 56, asparagine 86, and asparagine 139. 4 disulfide bridges follow: cysteine 188/cysteine 442, cysteine 257/cysteine 274, cysteine 283/cysteine 292, and cysteine 504/cysteine 526. Residue serine 189 is the Acyl-ester intermediate of the active site. Positions 258, 261, 263, 265, and 267 each coordinate Ca(2+). Residue asparagine 277 is glycosylated (N-linked (GlcNAc...) asparagine). N-linked (GlcNAc...) asparagine glycosylation is found at asparagine 312 and asparagine 356. Active-site charge relay system residues include aspartate 401 and histidine 441.

It belongs to the tannase family.

The protein resides in the secreted. It carries out the reaction feruloyl-polysaccharide + H2O = ferulate + polysaccharide.. In terms of biological role, involved in degradation of plant cell walls. Hydrolyzes the feruloyl-arabinose ester bond in arabinoxylans as well as the feruloyl-galactose and feruloyl-arabinose ester bonds in pectin. This chain is Probable feruloyl esterase B (faeB), found in Emericella nidulans (strain FGSC A4 / ATCC 38163 / CBS 112.46 / NRRL 194 / M139) (Aspergillus nidulans).